The sequence spans 1079 residues: DNA-directed RNA polymerase subunit beta (1079 aa).

Residues 963 to 982 (RSTGPYSRVTQQPVKGRARR) form a disordered region. Positions 966 to 975 (GPYSRVTQQP) are enriched in polar residues.

It belongs to the RNA polymerase beta chain family. In terms of assembly, in plastids the minimal PEP RNA polymerase catalytic core is composed of four subunits: alpha, beta, beta', and beta''. When a (nuclear-encoded) sigma factor is associated with the core the holoenzyme is formed, which can initiate transcription.

It localises to the plastid. It is found in the chloroplast. The enzyme catalyses RNA(n) + a ribonucleoside 5'-triphosphate = RNA(n+1) + diphosphate. In terms of biological role, DNA-dependent RNA polymerase catalyzes the transcription of DNA into RNA using the four ribonucleoside triphosphates as substrates. The sequence is that of DNA-directed RNA polymerase subunit beta from Pelargonium hortorum (Common geranium).